Reading from the N-terminus, the 226-residue chain is X-linked lymphocyte-regulated protein 3A (226 aa).

The segment covering 1-18 (MSSRERKATDTAGRHSRM) has biased composition (basic and acidic residues). The segment at 1–72 (MSSRERKATD…QDLVQEFEEP (72 aa)) is disordered. Residues 21 to 30 (NLSSDDSQNP) show a composition bias toward polar residues. Composition is skewed to basic and acidic residues over residues 39-48 (EVLDAGREDI) and 56-65 (QQARKEKQDL). The stretch at 155 to 210 (ETLTLQKNRMEEFKSLCEKYLEKLEVLRDSRGNSIAEELRRLIATLEIKLLMLHNQ) forms a coiled coil.

The protein belongs to the XLR/SYCP3 family. In terms of tissue distribution, expressed in lymphoid cells.

In Mus musculus (Mouse), this protein is X-linked lymphocyte-regulated protein 3A (Xlr3a).